Reading from the N-terminus, the 446-residue chain is tRNA wybutosine-synthesizing protein 2 homolog (446 aa).

Residues Ser-208, Lys-215, Glu-255, and 283–284 (DN) each bind S-adenosyl-L-methionine.

The protein belongs to the class I-like SAM-binding methyltransferase superfamily. TRM5/TYW2 family.

The enzyme catalyses 4-demethylwyosine(37) in tRNA(Phe) + S-adenosyl-L-methionine = 4-demethyl-7-[(3S)-3-amino-3-carboxypropyl]wyosine(37) in tRNA(Phe) + S-methyl-5'-thioadenosine + H(+). Its pathway is tRNA modification; wybutosine-tRNA(Phe) biosynthesis. In terms of biological role, S-adenosyl-L-methionine-dependent transferase that acts as a component of the wybutosine biosynthesis pathway. Wybutosine is a hyper modified guanosine with a tricyclic base found at the 3'-position adjacent to the anticodon of eukaryotic phenylalanine tRNA. Catalyzes the transfer of the alpha-amino-alpha-carboxypropyl (acp) group from S-adenosyl-L-methionine to the C-7 position of 4-demethylwyosine (imG-14) to produce wybutosine-86. This chain is tRNA wybutosine-synthesizing protein 2 homolog (Trmt12), found in Mus musculus (Mouse).